Reading from the N-terminus, the 268-residue chain is Mediator of RNA polymerase II transcription subunit 18 (268 aa).

This sequence belongs to the Mediator complex subunit 18 family. As to quaternary structure, component of the Mediator complex.

The protein localises to the nucleus. Component of the Mediator complex, a coactivator involved in the regulated transcription of nearly all RNA polymerase II-dependent genes. Mediator functions as a bridge to convey information from gene-specific regulatory proteins to the basal RNA polymerase II transcription machinery. Mediator is recruited to promoters by direct interactions with regulatory proteins and serves as a scaffold for the assembly of a functional preinitiation complex with RNA polymerase II and the general transcription factors. The protein is Mediator of RNA polymerase II transcription subunit 18 (srb5) of Neosartorya fischeri (strain ATCC 1020 / DSM 3700 / CBS 544.65 / FGSC A1164 / JCM 1740 / NRRL 181 / WB 181) (Aspergillus fischerianus).